The sequence spans 919 residues: Protein phosphatase 1 regulatory subunit 37 (919 aa).

LRR repeat units lie at residues 340–361, 368–388, 396–417, 425–445, 454–474, and 482–502; these read SLQY…FVAR, SLTV…MLLA, NLRE…AQLG, NIQI…AYVC, GLVT…GYLA, and SLET…HKLK. Disordered regions lie at residues 626 to 716 and 790 to 866; these read ATED…TIPS and APSQ…APLP. Residues 631–640 show a composition bias toward acidic residues; it reads THEEEEEEEA. The segment covering 641–658 has biased composition (basic and acidic residues); that stretch reads SPLKKIEEETTDALKDAT. Over residues 677 to 690 the composition is skewed to acidic residues; sequence PQDDSDSDTEDEET. The span at 691–701 shows a compositional bias: low complexity; sequence PTNTSLTSTSP. 2 stretches are compositionally biased toward polar residues: residues 791–801 and 811–837; these read PSQTQNSTQPT and DAQQ…LTES. Residues 833-861 are a coiled coil; it reads QLTESVSEEEQKKAETLNNEADINEDANT.

Belongs to the PPP1R37 family.

Its function is as follows. May inhibit phosphatase activity of protein phosphatase 1 (PP1) complexes. This is Protein phosphatase 1 regulatory subunit 37 (ppp1r37) from Danio rerio (Zebrafish).